The following is a 258-amino-acid chain: Imidazole glycerol phosphate synthase subunit HisF (258 aa).

Active-site residues include aspartate 11 and aspartate 130.

Belongs to the HisA/HisF family. In terms of assembly, heterodimer of HisH and HisF.

It is found in the cytoplasm. It catalyses the reaction 5-[(5-phospho-1-deoxy-D-ribulos-1-ylimino)methylamino]-1-(5-phospho-beta-D-ribosyl)imidazole-4-carboxamide + L-glutamine = D-erythro-1-(imidazol-4-yl)glycerol 3-phosphate + 5-amino-1-(5-phospho-beta-D-ribosyl)imidazole-4-carboxamide + L-glutamate + H(+). The protein operates within amino-acid biosynthesis; L-histidine biosynthesis; L-histidine from 5-phospho-alpha-D-ribose 1-diphosphate: step 5/9. In terms of biological role, IGPS catalyzes the conversion of PRFAR and glutamine to IGP, AICAR and glutamate. The HisF subunit catalyzes the cyclization activity that produces IGP and AICAR from PRFAR using the ammonia provided by the HisH subunit. This Haemophilus influenzae (strain 86-028NP) protein is Imidazole glycerol phosphate synthase subunit HisF.